Consider the following 123-residue polypeptide: Small ribosomal subunit protein uS12 (123 aa).

3-methylthioaspartic acid is present on Asp89. Residues 104-123 form a disordered region; it reads TAGVKDRKQARSKYGAKRPK. Basic residues predominate over residues 113-123; that stretch reads ARSKYGAKRPK.

The protein belongs to the universal ribosomal protein uS12 family. Part of the 30S ribosomal subunit. Contacts proteins S8 and S17. May interact with IF1 in the 30S initiation complex.

In terms of biological role, with S4 and S5 plays an important role in translational accuracy. Its function is as follows. Interacts with and stabilizes bases of the 16S rRNA that are involved in tRNA selection in the A site and with the mRNA backbone. Located at the interface of the 30S and 50S subunits, it traverses the body of the 30S subunit contacting proteins on the other side and probably holding the rRNA structure together. The combined cluster of proteins S8, S12 and S17 appears to hold together the shoulder and platform of the 30S subunit. In Chromobacterium violaceum (strain ATCC 12472 / DSM 30191 / JCM 1249 / CCUG 213 / NBRC 12614 / NCIMB 9131 / NCTC 9757 / MK), this protein is Small ribosomal subunit protein uS12.